The following is a 501-amino-acid chain: Proline--tRNA ligase (501 aa).

This sequence belongs to the class-II aminoacyl-tRNA synthetase family. ProS type 3 subfamily. Homodimer.

Its subcellular location is the cytoplasm. It catalyses the reaction tRNA(Pro) + L-proline + ATP = L-prolyl-tRNA(Pro) + AMP + diphosphate. In terms of biological role, catalyzes the attachment of proline to tRNA(Pro) in a two-step reaction: proline is first activated by ATP to form Pro-AMP and then transferred to the acceptor end of tRNA(Pro). The sequence is that of Proline--tRNA ligase from Halobacterium salinarum (strain ATCC 29341 / DSM 671 / R1).